Consider the following 209-residue polypeptide: Protein-L-isoaspartate O-methyltransferase (209 aa).

Serine 60 is a catalytic residue.

The protein belongs to the methyltransferase superfamily. L-isoaspartyl/D-aspartyl protein methyltransferase family.

The protein resides in the cytoplasm. The enzyme catalyses [protein]-L-isoaspartate + S-adenosyl-L-methionine = [protein]-L-isoaspartate alpha-methyl ester + S-adenosyl-L-homocysteine. Functionally, catalyzes the methyl esterification of L-isoaspartyl residues in peptides and proteins that result from spontaneous decomposition of normal L-aspartyl and L-asparaginyl residues. It plays a role in the repair and/or degradation of damaged proteins. This chain is Protein-L-isoaspartate O-methyltransferase, found in Photobacterium profundum (strain SS9).